The sequence spans 446 residues: Glycine--tRNA ligase (446 aa).

Substrate-binding residues include Arg-100 and Glu-158. Residues 190 to 192 (RNE), 200 to 205 (FRTREF), 275 to 276 (EL), and 319 to 322 (GIER) each bind ATP. 205 to 209 (FEQFE) is a binding site for substrate. 315-319 (EPAVG) contributes to the substrate binding site.

The protein belongs to the class-II aminoacyl-tRNA synthetase family. As to quaternary structure, homodimer.

It localises to the cytoplasm. The enzyme catalyses tRNA(Gly) + glycine + ATP = glycyl-tRNA(Gly) + AMP + diphosphate. Catalyzes the attachment of glycine to tRNA(Gly). This is Glycine--tRNA ligase from Mycoplasma genitalium (strain ATCC 33530 / DSM 19775 / NCTC 10195 / G37) (Mycoplasmoides genitalium).